The primary structure comprises 257 residues: Large ribosomal subunit protein eL8z (257 aa).

The protein belongs to the eukaryotic ribosomal protein eL8 family.

In Arabidopsis thaliana (Mouse-ear cress), this protein is Large ribosomal subunit protein eL8z (RPL7AA).